The primary structure comprises 252 residues: uncharacterized protein (252 aa).

16 to 40 (LVTGASDGIGREAAMTYARYGATVI) serves as a coordination point for NADP(+). Position 152 (S152) interacts with substrate. The Proton acceptor role is filled by Y165.

This sequence belongs to the short-chain dehydrogenases/reductases (SDR) family.

This is an uncharacterized protein from Escherichia coli (strain K12).